Reading from the N-terminus, the 147-residue chain is Transthyretin (147 aa).

Positions 1-20 (MASHRLLLLCLAGLVFVSEA) are cleaved as a signal peptide. The residue at position 30 (C30) is a Sulfocysteine. An L-thyroxine-binding site is contributed by K35. The residue at position 72 (S72) is a Phosphoserine. Residue E74 coordinates L-thyroxine. The N-linked (GlcNAc...) asparagine glycan is linked to N118. S137 provides a ligand contact to L-thyroxine.

Belongs to the transthyretin family. Homotetramer. Dimer of dimers. In the homotetramer, subunits assemble around a central channel that can accommodate two ligand molecules. Interacts with RBP4. Post-translationally, sulfonation of the reactive cysteine Cys-30 enhances the stability of the native conformation of TTR, avoiding misassembly of the protein leading to amyloid formation.

The protein resides in the secreted. Its function is as follows. Thyroid hormone-binding protein. Probably transports thyroxine from the bloodstream to the brain. This is Transthyretin (TTR) from Macaca fascicularis (Crab-eating macaque).